Consider the following 329-residue polypeptide: tRNA pseudouridine synthase B (329 aa).

The Nucleophile role is filled by D42.

This sequence belongs to the pseudouridine synthase TruB family. Type 1 subfamily.

It carries out the reaction uridine(55) in tRNA = pseudouridine(55) in tRNA. In terms of biological role, responsible for synthesis of pseudouridine from uracil-55 in the psi GC loop of transfer RNAs. The protein is tRNA pseudouridine synthase B of Lactococcus lactis subsp. lactis (strain IL1403) (Streptococcus lactis).